The primary structure comprises 227 residues: Cytochrome c oxidase subunit 2 (227 aa).

Over 1–14 the chain is Mitochondrial intermembrane; sequence MAYPFQLGLQDATS. Residues 15 to 45 form a helical membrane-spanning segment; the sequence is PIMEELLHFHDHTLMIVFLISSLVLYIISLM. The Mitochondrial matrix portion of the chain corresponds to 46–59; sequence LTTKLTHTSTMDAQ. Residues 60–87 traverse the membrane as a helical segment; sequence EVETVWTILPAIILILIALLSLRILYMM. Topologically, residues 88–227 are mitochondrial intermembrane; that stretch reads DEINNPFLTM…YFETWSALMV (140 aa). Cu cation-binding residues include histidine 161, cysteine 196, glutamate 198, cysteine 200, histidine 204, and methionine 207. Glutamate 198 is a binding site for Mg(2+). Tyrosine 218 is modified (phosphotyrosine).

It belongs to the cytochrome c oxidase subunit 2 family. As to quaternary structure, component of the cytochrome c oxidase (complex IV, CIV), a multisubunit enzyme composed of 14 subunits. The complex is composed of a catalytic core of 3 subunits MT-CO1, MT-CO2 and MT-CO3, encoded in the mitochondrial DNA, and 11 supernumerary subunits COX4I, COX5A, COX5B, COX6A, COX6B, COX6C, COX7A, COX7B, COX7C, COX8 and NDUFA4, which are encoded in the nuclear genome. The complex exists as a monomer or a dimer and forms supercomplexes (SCs) in the inner mitochondrial membrane with NADH-ubiquinone oxidoreductase (complex I, CI) and ubiquinol-cytochrome c oxidoreductase (cytochrome b-c1 complex, complex III, CIII), resulting in different assemblies (supercomplex SCI(1)III(2)IV(1) and megacomplex MCI(2)III(2)IV(2)). Found in a complex with TMEM177, COA6, COX18, COX20, SCO1 and SCO2. Interacts with TMEM177 in a COX20-dependent manner. Interacts with COX20. Interacts with COX16. Cu cation is required as a cofactor.

The protein resides in the mitochondrion inner membrane. It catalyses the reaction 4 Fe(II)-[cytochrome c] + O2 + 8 H(+)(in) = 4 Fe(III)-[cytochrome c] + 2 H2O + 4 H(+)(out). Functionally, component of the cytochrome c oxidase, the last enzyme in the mitochondrial electron transport chain which drives oxidative phosphorylation. The respiratory chain contains 3 multisubunit complexes succinate dehydrogenase (complex II, CII), ubiquinol-cytochrome c oxidoreductase (cytochrome b-c1 complex, complex III, CIII) and cytochrome c oxidase (complex IV, CIV), that cooperate to transfer electrons derived from NADH and succinate to molecular oxygen, creating an electrochemical gradient over the inner membrane that drives transmembrane transport and the ATP synthase. Cytochrome c oxidase is the component of the respiratory chain that catalyzes the reduction of oxygen to water. Electrons originating from reduced cytochrome c in the intermembrane space (IMS) are transferred via the dinuclear copper A center (CU(A)) of subunit 2 and heme A of subunit 1 to the active site in subunit 1, a binuclear center (BNC) formed by heme A3 and copper B (CU(B)). The BNC reduces molecular oxygen to 2 water molecules using 4 electrons from cytochrome c in the IMS and 4 protons from the mitochondrial matrix. In Nyctereutes procyonoides (Raccoon dog), this protein is Cytochrome c oxidase subunit 2 (MT-CO2).